Here is a 243-residue protein sequence, read N- to C-terminus: Terpene cyclase nodB (243 aa).

Helical transmembrane passes span 19–39 (ISDI…AGMI), 50–70 (MAPL…LIYP), and 75–95 (IEQG…YTAI). Asn111 carries N-linked (GlcNAc...) asparagine glycosylation. A run of 4 helical transmembrane segments spans residues 112–132 (ITLI…ALAA), 134–154 (IGPA…LSVG), 169–189 (SYTL…FAIL), and 205–225 (LVLW…ICLW).

It belongs to the paxB family.

Its subcellular location is the membrane. It participates in secondary metabolite biosynthesis. In terms of biological role, terpene cyclase; part of the gene cluster that mediates the biosynthesis of the indole diterpenes nodulisporic acids (NA). Nodulisporic acid A (NAA) and its chemically modified derivatives are of particular significance because of their highly potent insecticidal activity against blood-feeding arthropods and lack of observable adverse effects on mammals, in particular the tremogenicity associated with the paspaline-derived IDTs is not observed. The geranylgeranyl diphosphate (GGPP) synthase ggs1, localized outside of the cluster, is proposed to catalyze the first step in nodulisporic acid biosynthesis via conversion of farnesyl pyrophosphate and isopentyl pyrophosphate into geranylgeranyl pyrophosphate (GGPP). Condensation of indole-3-glycerol phosphate with GGPP by the prenyl transferase nodC then forms 3-geranylgeranylindole (3-GGI). Epoxidation by the FAD-dependent monooxygenase nodM leads to a single-epoxidized-GGI that is substrate of the terpene cyclase nodB for cyclization to yield emindole SB. The terminal methyl carbon, C28, of emindole SB is then oxidized by the cytochrome P450 monooxygenase nodW to produce nodulisporic acid F (NAF), the pentacyclic core of NAA. NAF is converted to nodulisporic acid E (NAE) via prenylation. This step is probably performed by one of the indole diterpene prenyltransferases nodD1 or nodD2. Several oxidation steps performed by the FAD-linked oxidoreductase nodO and one of the cytochrome P450 monooxygenase nodR, nodX or nodZ further convert NAE to nodulisporic acid D (NAD). NAD is substrate of cytochrome P450 monooxygenase nodJ to produce the precursor of nodulisporic acid C (NAC), converted to NAC by one of the indole diterpene prenyltransferases nodD1 or nodD2. The FAD-dependent monooxygenase nodY2 then oxidizes NAC to nodulisporic acid B (NAB). Finally NAB is converted to NAA by one of the cytochrome P450 monooxygenases nodR, nodX or nodZ. The chain is Terpene cyclase nodB from Hypoxylon pulicicidum.